The chain runs to 343 residues: Aspartate carbamoyltransferase catalytic subunit (343 aa).

2 residues coordinate carbamoyl phosphate: arginine 91 and threonine 92. Residue lysine 119 coordinates L-aspartate. Carbamoyl phosphate-binding residues include arginine 141, histidine 171, and glutamine 174. 2 residues coordinate L-aspartate: arginine 204 and arginine 259. Residues glycine 300 and proline 301 each coordinate carbamoyl phosphate.

This sequence belongs to the aspartate/ornithine carbamoyltransferase superfamily. ATCase family. As to quaternary structure, heterododecamer (2C3:3R2) of six catalytic PyrB chains organized as two trimers (C3), and six regulatory PyrI chains organized as three dimers (R2).

The catalysed reaction is carbamoyl phosphate + L-aspartate = N-carbamoyl-L-aspartate + phosphate + H(+). The protein operates within pyrimidine metabolism; UMP biosynthesis via de novo pathway; (S)-dihydroorotate from bicarbonate: step 2/3. Functionally, catalyzes the condensation of carbamoyl phosphate and aspartate to form carbamoyl aspartate and inorganic phosphate, the committed step in the de novo pyrimidine nucleotide biosynthesis pathway. The sequence is that of Aspartate carbamoyltransferase catalytic subunit from Burkholderia orbicola (strain MC0-3).